The primary structure comprises 203 residues: ATP-dependent Clp protease proteolytic subunit (203 aa).

Residue Ser-103 is the Nucleophile of the active site. His-128 is a catalytic residue.

It belongs to the peptidase S14 family. Fourteen ClpP subunits assemble into 2 heptameric rings which stack back to back to give a disk-like structure with a central cavity, resembling the structure of eukaryotic proteasomes.

Its subcellular location is the cytoplasm. The catalysed reaction is Hydrolysis of proteins to small peptides in the presence of ATP and magnesium. alpha-casein is the usual test substrate. In the absence of ATP, only oligopeptides shorter than five residues are hydrolyzed (such as succinyl-Leu-Tyr-|-NHMec, and Leu-Tyr-Leu-|-Tyr-Trp, in which cleavage of the -Tyr-|-Leu- and -Tyr-|-Trp bonds also occurs).. In terms of biological role, cleaves peptides in various proteins in a process that requires ATP hydrolysis. Has a chymotrypsin-like activity. Plays a major role in the degradation of misfolded proteins. The sequence is that of ATP-dependent Clp protease proteolytic subunit from Dichelobacter nodosus (strain VCS1703A).